The chain runs to 78 residues: Structural DNA-binding protein p10 (78 aa).

Positions 1 to 25 (MPTKAGTKSTANKKTTKGSSKSGSA) are enriched in low complexity. The segment at 1 to 41 (MPTKAGTKSTANKKTTKGSSKSGSARGHTGKTHAPPSMHSG) is disordered.

This sequence belongs to the asfivirus P10 family.

Its subcellular location is the virion. May play a role in genome packaging through direct interaction with viral DNA. Binds to ssDNA and dsDNA with the same apparent affinity in vitro. This chain is Structural DNA-binding protein p10, found in African swine fever virus (isolate Warthog/Namibia/Wart80/1980) (ASFV).